Consider the following 190-residue polypeptide: Putative transcription factor ovo-like protein 3 (190 aa).

2 disordered regions span residues 1-21 (MPRAFLVRSRRPQPPNWGHLP) and 35-65 (SLGGPPAQQSSSVRDPWTAQPTQGNLTSAPR). Over residues 41–62 (AQQSSSVRDPWTAQPTQGNLTS) the composition is skewed to polar residues. 4 C2H2-type zinc fingers span residues 70–92 (LGCPLCPKAFPLQRMLTRHLKCH), 98–120 (HLCRCCGKGFHDAFDLKRHMRTH), 126–149 (FRCSACGKAFTQRCSLEAHLAKVH), and 165–187 (HVCEDCGFTSSRPDTYAQHRALH).

It belongs to the krueppel C2H2-type zinc-finger protein family.

Its subcellular location is the nucleus. In terms of biological role, may act as a transcription regulator. This Homo sapiens (Human) protein is Putative transcription factor ovo-like protein 3 (OVOL3).